Reading from the N-terminus, the 417-residue chain is Monooxygenase cfoF (417 aa).

Residues 45-48, arginine 126, and aspartate 327 contribute to the FAD site; that span reads DRDK. A compositionally biased stretch (basic and acidic residues) spans 389–399; it reads AHTTQLDRDQF. Residues 389 to 417 are disordered; the sequence is AHTTQLDRDQFTDGSGANDFLVGQQHSDK.

The protein belongs to the aromatic-ring hydroxylase family. KMO subfamily. Requires FAD as cofactor.

Its pathway is secondary metabolite biosynthesis; flavonoid biosynthesis. In terms of biological role, monooxygenase; part of the gene cluster that mediates the biosynthesis of chlorflavonin, a fungal flavonoid with acetolactate synthase inhibitory activity. Within the pathway, cfoF is responsible for the hydroxylation of the flavonoid skeleton at position C3. The pathway begins with the PKS-NRPS hybrid synthetase cfoA that uses benzoic acid or p-hydroxybenzoic acid as a starter unit with four rounds of chain elongation using malonyl-CoA to form the chalcone skeleton. Then, a new type of chalcone isomerase, cfoK, catalyzes the conversion of the chalcone into a flavanone by a histidine-mediated oxa-Michael addition mechanism. The desaturation of flavanone to flavone is catalyzed by a new type of flavone synthase, the flavin mononucleotide (FMN)-dependent oxidoreductase cfoJ. Monooxygenases cfoF, cfoG, and P450 cfoH are responsible for the hydroxylation of the flavonoid skeleton at sites C3, C8, and C2', respectively. Like cfoF, the dehydratase cfoI plays also a role in the hydroxylation of position C3. Methyltransferases cfoB, cfoC, and cfoD then catalyze the methylation of C7-OH, C8-OH, and C3-OH, respectively. Finally, the monooxygenase cfoE is responsible for the chlorination of flavonoid at position C3'. This chain is Monooxygenase cfoF, found in Aspergillus candidus.